The following is a 288-amino-acid chain: Quinate/shikimate dehydrogenase (288 aa).

Substrate-binding residues include Lys-71 and Asp-107. NAD(+)-binding positions include 132–135 (AGGA), 155–158 (NRRD), Lys-205, 232–235 (CVYN), and Gly-255.

The protein belongs to the shikimate dehydrogenase family. As to quaternary structure, homodimer.

It catalyses the reaction L-quinate + NAD(+) = 3-dehydroquinate + NADH + H(+). The enzyme catalyses L-quinate + NADP(+) = 3-dehydroquinate + NADPH + H(+). It carries out the reaction shikimate + NADP(+) = 3-dehydroshikimate + NADPH + H(+). The catalysed reaction is shikimate + NAD(+) = 3-dehydroshikimate + NADH + H(+). It participates in metabolic intermediate biosynthesis; chorismate biosynthesis; chorismate from D-erythrose 4-phosphate and phosphoenolpyruvate: step 4/7. Its function is as follows. The actual biological function of YdiB remains unclear, nor is it known whether 3-dehydroshikimate or quinate represents the natural substrate. Catalyzes the reversible NAD-dependent reduction of both 3-dehydroshikimate (DHSA) and 3-dehydroquinate to yield shikimate (SA) and quinate, respectively. It can use both NAD or NADP for catalysis, however it has higher catalytic efficiency with NAD. The sequence is that of Quinate/shikimate dehydrogenase from Escherichia coli O157:H7.